Consider the following 677-residue polypeptide: Methionine--tRNA ligase (677 aa).

A 'HIGH' region motif is present at residues 15–25; it reads PYANGSIHLGH. The Zn(2+) site is built by cysteine 146, cysteine 149, cysteine 159, and cysteine 162. The short motif at 333–337 is the 'KMSKS' region element; the sequence is KMSKS. Lysine 336 serves as a coordination point for ATP. A tRNA-binding domain is found at 575–677; sequence DFAKVDLRVA…AGAKPGHQVK (103 aa).

It belongs to the class-I aminoacyl-tRNA synthetase family. MetG type 1 subfamily. In terms of assembly, homodimer. Zn(2+) is required as a cofactor.

The protein resides in the cytoplasm. The enzyme catalyses tRNA(Met) + L-methionine + ATP = L-methionyl-tRNA(Met) + AMP + diphosphate. In terms of biological role, is required not only for elongation of protein synthesis but also for the initiation of all mRNA translation through initiator tRNA(fMet) aminoacylation. The chain is Methionine--tRNA ligase from Shigella boydii serotype 18 (strain CDC 3083-94 / BS512).